Consider the following 125-residue polypeptide: MARIVGVELPNNKKVWVALTYIYGIGRSRSFEILKNTGIDPEKRVGDLTDEEISKITKYIQDHFKVEGELRSEVERNIRRLIEIGCYRGIRHKLGLPVRGQKTRSNARTRKGPRPSRIKTKKKSS.

Positions 97-125 (PVRGQKTRSNARTRKGPRPSRIKTKKKSS) are disordered. A compositionally biased stretch (basic residues) spans 101-125 (QKTRSNARTRKGPRPSRIKTKKKSS).

The protein belongs to the universal ribosomal protein uS13 family. As to quaternary structure, part of the 30S ribosomal subunit. Forms a loose heterodimer with protein S19. Forms two bridges to the 50S subunit in the 70S ribosome.

Its function is as follows. Located at the top of the head of the 30S subunit, it contacts several helices of the 16S rRNA. In the 70S ribosome it contacts the 23S rRNA (bridge B1a) and protein L5 of the 50S subunit (bridge B1b), connecting the 2 subunits; these bridges are implicated in subunit movement. Contacts the tRNAs in the A and P-sites. This Thermotoga maritima (strain ATCC 43589 / DSM 3109 / JCM 10099 / NBRC 100826 / MSB8) protein is Small ribosomal subunit protein uS13.